A 233-amino-acid polypeptide reads, in one-letter code: Coproporphyrinogen-III oxidase 2, chloroplastic (233 aa).

A chloroplast-targeting transit peptide spans M1 to S48. Position 174 (S174) interacts with substrate. Residue H188 is the Proton donor of the active site.

It belongs to the aerobic coproporphyrinogen-III oxidase family. As to quaternary structure, homodimer.

It localises to the plastid. The protein resides in the chloroplast. The catalysed reaction is coproporphyrinogen III + O2 + 2 H(+) = protoporphyrinogen IX + 2 CO2 + 2 H2O. It functions in the pathway porphyrin-containing compound metabolism; protoporphyrin-IX biosynthesis; protoporphyrinogen-IX from coproporphyrinogen-III (O2 route): step 1/1. Its pathway is porphyrin-containing compound metabolism; chlorophyll biosynthesis. Key enzyme in heme biosynthesis. Catalyzes the oxidative decarboxylation of propionic acid side chains of rings A and B of coproporphyrinogen III. The sequence is that of Coproporphyrinogen-III oxidase 2, chloroplastic (CPX2) from Arabidopsis thaliana (Mouse-ear cress).